Here is a 151-residue protein sequence, read N- to C-terminus: Large ribosomal subunit protein uL15 (151 aa).

The interval 1–62 is disordered; sequence MVKLNELFPK…GGQMPLYRRV (62 aa). Residues 11-20 are compositionally biased toward basic residues; that stretch reads HGSRKAKRRI.

The protein belongs to the universal ribosomal protein uL15 family. As to quaternary structure, part of the 50S ribosomal subunit.

Its function is as follows. Binds to the 23S rRNA. This chain is Large ribosomal subunit protein uL15, found in Elusimicrobium minutum (strain Pei191).